The following is a 414-amino-acid chain: Putative competence-damage inducible protein (414 aa).

This sequence belongs to the CinA family.

This is Putative competence-damage inducible protein from Clostridium novyi (strain NT).